Here is a 391-residue protein sequence, read N- to C-terminus: Processive diacylglycerol beta-glucosyltransferase (391 aa).

It belongs to the glycosyltransferase 28 family. UgtP subfamily.

The protein resides in the cell membrane. It catalyses the reaction a 1,2-diacyl-3-O-(beta-D-glucopyranosyl)-sn-glycerol + UDP-alpha-D-glucose = a 1,2-diacyl-3-O-(beta-D-Glc-(1-&gt;6)-beta-D-Glc)-sn-glycerol + UDP + H(+). The enzyme catalyses a 1,2-diacyl-sn-glycerol + UDP-alpha-D-glucose = a 1,2-diacyl-3-O-(beta-D-glucopyranosyl)-sn-glycerol + UDP + H(+). It functions in the pathway glycolipid metabolism; diglucosyl-diacylglycerol biosynthesis. Its function is as follows. Processive glucosyltransferase involved in the biosynthesis of both the bilayer- and non-bilayer-forming membrane glucolipids. Is able to successively transfer two glucosyl residues to diacylglycerol (DAG), thereby catalyzing the formation of beta-monoglucosyl-DAG (3-O-(beta-D-glucopyranosyl)-1,2-diacyl-sn-glycerol) and beta-diglucosyl-DAG (3-O-(beta-D-glucopyranosyl-beta-(1-&gt;6)-D-glucopyranosyl)-1,2-diacyl-sn-glycerol). Beta-diglucosyl-DAG is the predominant glycolipid found in Bacillales and is also used as a membrane anchor for lipoteichoic acid (LTA). The sequence is that of Processive diacylglycerol beta-glucosyltransferase from Staphylococcus aureus (strain MRSA252).